A 328-amino-acid polypeptide reads, in one-letter code: Octanoyltransferase, mitochondrial (328 aa).

One can recognise a BPL/LPL catalytic domain in the interval 108–312; the sequence is MKPNPIILTF…EMTKLLGIKT (205 aa). Substrate is bound by residues 162–169, 241–243, and 254–256; these read RGGQVTFH, SVG, and GVA. The Acyl-thioester intermediate role is filled by cysteine 272.

It belongs to the LipB family.

Its subcellular location is the mitochondrion. The catalysed reaction is octanoyl-[ACP] + L-lysyl-[protein] = N(6)-octanoyl-L-lysyl-[protein] + holo-[ACP] + H(+). It functions in the pathway protein modification; protein lipoylation via endogenous pathway; protein N(6)-(lipoyl)lysine from octanoyl-[acyl-carrier-protein]: step 1/2. Catalyzes the transfer of endogenously produced octanoic acid from octanoyl-acyl-carrier-protein onto the lipoyl domains of lipoate-dependent enzymes. Lipoyl-ACP can also act as a substrate although octanoyl-ACP is likely to be the physiological substrate. This Saccharomyces cerevisiae (strain ATCC 204508 / S288c) (Baker's yeast) protein is Octanoyltransferase, mitochondrial (LIP2).